The sequence spans 111 residues: Nucleoid-associated protein Fphi_0115 (111 aa).

Residues Met-1 to Glu-27 are disordered. Residues Glu-17–Glu-27 are compositionally biased toward basic and acidic residues.

It belongs to the YbaB/EbfC family. In terms of assembly, homodimer.

It is found in the cytoplasm. The protein localises to the nucleoid. Its function is as follows. Binds to DNA and alters its conformation. May be involved in regulation of gene expression, nucleoid organization and DNA protection. This chain is Nucleoid-associated protein Fphi_0115, found in Francisella philomiragia subsp. philomiragia (strain ATCC 25017 / CCUG 19701 / FSC 153 / O#319-036).